The primary structure comprises 858 residues: MESRYQPTAIEEKWQQTWAEVGIDQTPTDRSKPKFYALSMFPYPSGNLHMGHVRNYTITDVIARVRRMQGYRVLHPMGWDAFGLPAENAAIKRGIHPAKWTADNITQMRSELKRLGLSYDWNCELATCSPDYYRWTQWIFLQFYQAGLAYQKEAAVNWDPIDQTVLANEQVDSEGRSWRSGAKVERKLLRQWFLKITDYAEELLQDLDQLTGWPEKVRKLQANWIGKSTGAYLEFPIVGRDEKISVYTTRPDTVYGVSYVVLAPEHPLTLQVTTKKQLKAVKSFIQEVTAASEIERTAEDQPKRGIATGGKAINPFTGAEIPIWIADYVLYEYGTGAVMGVPAHDSRDFKFAQTYQLPIRQVIIPPDPDLNEQPILQEAYTEPGLLINSGEFDGMPSTDAKAAIVAKAEATGWGQARVQYRLRDWLISRQRYWGAPIPVIHCPQCGIVPVPEADLPVVLPDDVQFSGRGPSPLAQLESWVKVNCPTCNTPARRETDTMDTFIDSSWYYLRYPDAQNDQQVFDPAKTNDWLPVDQYVGGIEHAILHLLYSRFFTKVLRDRGLLNFDEPFQRLLTQGMVQGLTYTNPNRSDSSRYIPSNLVDPNDPKDPETGEPLEVSYQTMSKSKYNGVAPEEVINKYGADTARMFILFKAPPEKDLEWDDADVEGQFRFLNRVWRLVTQYPVIEPTTKQGDALAKEEKELRRAIHTAIKEITADLGEEYQLNTAVSELMKLSNALTDASCKDSVIYTEGIETLLLLLAPFAPHISEELWQQLGHTTSVHQQSWPQVDPSALIVDEITIVIQILGKTRGTIQVPASSSREELEEYARQTPVAQRYLEGKTIKKVIVVPGKLVNFVVADA.

Positions 42-52 match the 'HIGH' region motif; that stretch reads PYPSGNLHMGH. Positions 584 to 594 are enriched in polar residues; it reads NPNRSDSSRYI. Residues 584–611 are disordered; it reads NPNRSDSSRYIPSNLVDPNDPKDPETGE. The 'KMSKS' region signature appears at 619-623; sequence TMSKS. Residue lysine 622 participates in ATP binding.

Belongs to the class-I aminoacyl-tRNA synthetase family.

Its subcellular location is the cytoplasm. The catalysed reaction is tRNA(Leu) + L-leucine + ATP = L-leucyl-tRNA(Leu) + AMP + diphosphate. The chain is Leucine--tRNA ligase from Cyanothece sp. (strain PCC 7425 / ATCC 29141).